The primary structure comprises 82 residues: MDLSNRTVVQVVVLALVAQVTLSQHWSYGWLPGGKRSVGELEATIKMMDTGGVVALPEETSAHFSERLRPYDVILKKWMPHK.

A signal peptide spans 1 to 23 (MDLSNRTVVQVVVLALVAQVTLS). Glutamine 24 carries the post-translational modification Pyrrolidone carboxylic acid. Glycine 33 is modified (glycine amide).

This sequence belongs to the GnRH family.

The protein resides in the secreted. Stimulates the secretion of gonadotropins. The chain is Progonadoliberin-3 (gnrh3) from Salmo trutta (Brown trout).